A 428-amino-acid polypeptide reads, in one-letter code: Elongation factor 1-alpha (428 aa).

The tr-type G domain occupies 5–215 (KPHVNIVFIG…ALDQIPEPPK (211 aa)). The interval 14–21 (GHVDHGKS) is G1. 14 to 21 (GHVDHGKS) provides a ligand contact to GTP. S21 is a binding site for Mg(2+). The G2 stretch occupies residues 68–72 (GITID). Residues 89–92 (DAPG) are G3. Residues 89-93 (DAPGH) and 144-147 (NKMD) contribute to the GTP site. Residues 144 to 147 (NKMD) form a G4 region. A G5 region spans residues 181–183 (SAW).

The protein belongs to the TRAFAC class translation factor GTPase superfamily. Classic translation factor GTPase family. EF-Tu/EF-1A subfamily.

It localises to the cytoplasm. It catalyses the reaction GTP + H2O = GDP + phosphate + H(+). Its function is as follows. GTP hydrolase that promotes the GTP-dependent binding of aminoacyl-tRNA to the A-site of ribosomes during protein biosynthesis. This chain is Elongation factor 1-alpha, found in Thermococcus onnurineus (strain NA1).